We begin with the raw amino-acid sequence, 270 residues long: Acetylglutamate kinase (270 aa).

Substrate-binding positions include 53 to 54 (GG), Arg-75, and Asn-167.

It belongs to the acetylglutamate kinase family. ArgB subfamily.

The protein localises to the cytoplasm. The enzyme catalyses N-acetyl-L-glutamate + ATP = N-acetyl-L-glutamyl 5-phosphate + ADP. Its pathway is amino-acid biosynthesis; L-arginine biosynthesis; N(2)-acetyl-L-ornithine from L-glutamate: step 2/4. Functionally, catalyzes the ATP-dependent phosphorylation of N-acetyl-L-glutamate. The protein is Acetylglutamate kinase of Shewanella halifaxensis (strain HAW-EB4).